A 176-amino-acid polypeptide reads, in one-letter code: MALWRAYQRALAAHPWKVQVLTAGSLMGLGDIISQQLVERRGLQEHQRGRTLTMVSLGCGFVGPVVGGWYKVLDRFIPGTTKVDALKKMLLDQGGFAPCFLGCFLPLVGALNGLSAQDNWAKLQRDYPDALITNYYLWPAVQLANFYLVPLHYRLAVVQCVAVIWNSYLSWKAHRL.

The next 4 membrane-spanning stretches (helical) occupy residues 18–38 (VQVL…QQLV), 53–73 (TMVS…YKVL), 94–114 (GGFA…LNGL), and 131–151 (LITN…LVPL).

It belongs to the peroxisomal membrane protein PXMP2/4 family. As to expression, ubiquitous. Expressed in pancreas, kidney, muscle, liver, lung, placenta, brain and heart.

The protein localises to the mitochondrion inner membrane. Functionally, non-selective channel that modulates the membrane potential under normal conditions and oxidative stress, and is involved in mitochondrial homeostasis. Involved in mitochondrial deoxynucleoside triphosphates (dNTP) pool homeostasis and mitochondrial DNA (mtDNA) maintenance. May be involved in the regulation of reactive oxygen species metabolism and the control of oxidative phosphorylation. The sequence is that of Mitochondrial inner membrane protein Mpv17 from Homo sapiens (Human).